Consider the following 296-residue polypeptide: MSKLVLTTDFPDLKLAARGKVRDIYDLGETLLIVTTDRISAFDVIMNEGIPDKGYVLTQISAFWFRQMEDIIPNHIISTEVKDFPAECQKYADVLEGRSMLVKKAKPLPAECIVRGYISGSGWKDYQATGSVCGITLPAGLKESDRLPEPIFTPSTKAELGTHDENISFEKMVDMCGKDIAEKVRDITLKIYKKARDIADGKGIIIADTKFEYGIYEGELIIIDECMTPDSSRFWPKDSYQPGGPQPSFDKQFLRDYLETLDWDKTAPAPPLPEEIVRKTGEKYMEALVKLTGKGK.

The protein belongs to the SAICAR synthetase family.

The enzyme catalyses 5-amino-1-(5-phospho-D-ribosyl)imidazole-4-carboxylate + L-aspartate + ATP = (2S)-2-[5-amino-1-(5-phospho-beta-D-ribosyl)imidazole-4-carboxamido]succinate + ADP + phosphate + 2 H(+). It functions in the pathway purine metabolism; IMP biosynthesis via de novo pathway; 5-amino-1-(5-phospho-D-ribosyl)imidazole-4-carboxamide from 5-amino-1-(5-phospho-D-ribosyl)imidazole-4-carboxylate: step 1/2. The sequence is that of Phosphoribosylaminoimidazole-succinocarboxamide synthase from Geotalea uraniireducens (strain Rf4) (Geobacter uraniireducens).